The primary structure comprises 236 residues: 2-C-methyl-D-erythritol 4-phosphate cytidylyltransferase (236 aa).

It belongs to the IspD/TarI cytidylyltransferase family. IspD subfamily. Homodimer.

The enzyme catalyses 2-C-methyl-D-erythritol 4-phosphate + CTP + H(+) = 4-CDP-2-C-methyl-D-erythritol + diphosphate. It participates in isoprenoid biosynthesis; isopentenyl diphosphate biosynthesis via DXP pathway; isopentenyl diphosphate from 1-deoxy-D-xylulose 5-phosphate: step 2/6. In terms of biological role, catalyzes the formation of 4-diphosphocytidyl-2-C-methyl-D-erythritol from CTP and 2-C-methyl-D-erythritol 4-phosphate (MEP). The protein is 2-C-methyl-D-erythritol 4-phosphate cytidylyltransferase of Salmonella paratyphi A (strain ATCC 9150 / SARB42).